The following is a 258-amino-acid chain: NAD kinase (258 aa).

Catalysis depends on D51, which acts as the Proton acceptor. Residues 51–52 (DG), K56, 119–120 (ND), K130, D149, 160–165 (TAYSLS), and A184 contribute to the NAD(+) site.

The protein belongs to the NAD kinase family. A divalent metal cation serves as cofactor.

Its subcellular location is the cytoplasm. It catalyses the reaction NAD(+) + ATP = ADP + NADP(+) + H(+). Its function is as follows. Involved in the regulation of the intracellular balance of NAD and NADP, and is a key enzyme in the biosynthesis of NADP. Catalyzes specifically the phosphorylation on 2'-hydroxyl of the adenosine moiety of NAD to yield NADP. The polypeptide is NAD kinase (Thermotoga sp. (strain RQ2)).